Here is a 261-residue protein sequence, read N- to C-terminus: Pantothenate synthetase (261 aa).

An ATP-binding site is contributed by 29-36 (MGALHNGH). Catalysis depends on His36, which acts as the Proton donor. Gln60 serves as a coordination point for (R)-pantoate. Residue Gln60 participates in beta-alanine binding. 147–150 (GEKD) contributes to the ATP binding site. Gln153 serves as a coordination point for (R)-pantoate. 184–187 (LSSR) provides a ligand contact to ATP.

It belongs to the pantothenate synthetase family. Homodimer.

Its subcellular location is the cytoplasm. It catalyses the reaction (R)-pantoate + beta-alanine + ATP = (R)-pantothenate + AMP + diphosphate + H(+). It functions in the pathway cofactor biosynthesis; (R)-pantothenate biosynthesis; (R)-pantothenate from (R)-pantoate and beta-alanine: step 1/1. Functionally, catalyzes the condensation of pantoate with beta-alanine in an ATP-dependent reaction via a pantoyl-adenylate intermediate. In Francisella tularensis subsp. mediasiatica (strain FSC147), this protein is Pantothenate synthetase.